The chain runs to 157 residues: Transcriptional repressor NrdR (157 aa).

Residues C3–C34 fold into a zinc finger. One can recognise an ATP-cone domain in the interval P49–A139.

The protein belongs to the NrdR family. The cofactor is Zn(2+).

Functionally, negatively regulates transcription of bacterial ribonucleotide reductase nrd genes and operons by binding to NrdR-boxes. The protein is Transcriptional repressor NrdR of Coxiella burnetii (strain CbuK_Q154) (Coxiella burnetii (strain Q154)).